The sequence spans 424 residues: DNA repair protein Rad60 (424 aa).

Tyr-26 carries the phosphotyrosine modification. Residues Ser-32 and Ser-34 each carry the phosphoserine modification. A disordered region spans residues 45–177 (LPKKSTKTGK…LTTTTSNSAS (133 aa)). Positions 48–57 (KSTKTGKRKN) are enriched in basic residues. The span at 77-93 (QAEHKAVEPEEDMRTER) shows a compositional bias: basic and acidic residues. Ser-96 bears the Phosphoserine mark. The span at 104–123 (EMEKKNGQQSDVEKHAKEND) shows a compositional bias: basic and acidic residues. Over residues 156–166 (KPKKRGQKKRT) the composition is skewed to basic residues. The span at 167-177 (SLTTTTSNSAS) shows a compositional bias: low complexity.

As to quaternary structure, forms a complex with dgrn; likely required for localization to the nuclear periphery. Interacts with the SMC5-SMC6 complex members SMC5 and SMC6/jnj following ionizing radiation (IR) to induce DNA damage. Interaction between the SMC5-SMC6 complex and the dgrn-Rad60 complex, may stabilize the association of heterochromatic DSBs with the nuclear periphery.

The protein localises to the nucleus. Its subcellular location is the nucleoplasm. Its function is as follows. Required for repair of DNA double strand breaks which occur during replication or are induced by ionizing radiation (IR). Functions with dgrn and downstream of the SMC5-SMC6 complex to regulate strand break repair. Likely functions by stabilizing the association of heterochromatic double strand breaks (DSBs) with the nuclear periphery as part of the homologous recombination (HR) repair process. This chain is DNA repair protein Rad60, found in Drosophila melanogaster (Fruit fly).